Consider the following 884-residue polypeptide: Protein translocase subunit SecA (884 aa).

ATP contacts are provided by residues Gln-82, 100 to 104 (GEGKT), and Asp-491.

The protein belongs to the SecA family.

The protein localises to the plastid. Its subcellular location is the chloroplast stroma. It is found in the chloroplast thylakoid membrane. The catalysed reaction is ATP + H2O + cellular proteinSide 1 = ADP + phosphate + cellular proteinSide 2.. In terms of biological role, has a central role in coupling the hydrolysis of ATP to the transfer of proteins across the thylakoid membrane. The chain is Protein translocase subunit SecA from Olisthodiscus luteus (Marine phytoflagellate).